The sequence spans 231 residues: Urease subunit gamma/beta (231 aa).

Residues 1–101 (MLLTPTELER…LVTVHQPIRP (101 aa)) are urease gamma. Positions 102-231 (GKLPLAVMPT…RARAQHFKGA (130 aa)) are urease beta.

It in the N-terminal section; belongs to the urease gamma subunit family. This sequence in the C-terminal section; belongs to the urease beta subunit family. In terms of assembly, heterohexamer of 3 UreC (alpha) and 3 UreAB (gamma/beta) subunits.

The protein localises to the cytoplasm. The enzyme catalyses urea + 2 H2O + H(+) = hydrogencarbonate + 2 NH4(+). It functions in the pathway nitrogen metabolism; urea degradation; CO(2) and NH(3) from urea (urease route): step 1/1. The chain is Urease subunit gamma/beta from Pseudomonas syringae pv. tomato (strain ATCC BAA-871 / DC3000).